The chain runs to 224 residues: UPF0758 protein SPO0054 (224 aa).

One can recognise an MPN domain in the interval 102–224; the sequence is VISSWDALLD…ELSFRAEGYL (123 aa). Residues His173, His175, and Asp186 each contribute to the Zn(2+) site. Positions 173–186 match the JAMM motif motif; it reads HNHPSGDPTPSQSD.

The protein belongs to the UPF0758 family.

In Ruegeria pomeroyi (strain ATCC 700808 / DSM 15171 / DSS-3) (Silicibacter pomeroyi), this protein is UPF0758 protein SPO0054.